Here is a 722-residue protein sequence, read N- to C-terminus: BTB/POZ domain-containing protein 9 (722 aa).

Positions 46 to 112 (ADVEFIVEEE…IYSGTLLLST (67 aa)) constitute a BTB domain. The BACK domain maps to 151 to 247 (CMILDAARLY…MNLEHLLQVV (97 aa)). Residues 565-593 (QDKNYLKKIADMEKEREKREKEKKTAKTD) are a coiled coil. The span at 577–594 (EKEREKREKEKKTAKTDD) shows a compositional bias: basic and acidic residues. 2 disordered regions span residues 577–626 (EKER…VLRS) and 640–722 (PLTP…RETL). The segment covering 597 to 606 (IASTSGSSLA) has biased composition (polar residues). Low complexity predominate over residues 607–626 (SGHAESPSTSSSSSQSVLRS). Pro residues predominate over residues 641–658 (LTPPALSPPGTPALPAPL). Over residues 670-679 (EQNQPSNISA) the composition is skewed to polar residues. Over residues 686 to 704 (SPSSRSNPSPSLSRSRSQS) the composition is skewed to low complexity.

As to expression, detected in the brain (at protein level).

The protein localises to the cytoplasm. Its function is as follows. Essential for the homeostatic regulation of sleep and motor activity, by depressing hyperactivity and wakefulness. May function, at least in part, by ensuring dopamine biosynthesis. The polypeptide is BTB/POZ domain-containing protein 9 (Drosophila melanogaster (Fruit fly)).